A 136-amino-acid chain; its full sequence is Large ribosomal subunit protein eL27 (136 aa).

It belongs to the eukaryotic ribosomal protein eL27 family.

The chain is Large ribosomal subunit protein eL27 (RPL27) from Candida albicans (Yeast).